A 117-amino-acid polypeptide reads, in one-letter code: DNA-directed RNA polymerase subunit omega (117 aa).

It belongs to the RNA polymerase subunit omega family. In terms of assembly, the RNAP catalytic core consists of 2 alpha, 1 beta, 1 beta' and 1 omega subunit. When a sigma factor is associated with the core the holoenzyme is formed, which can initiate transcription.

The catalysed reaction is RNA(n) + a ribonucleoside 5'-triphosphate = RNA(n+1) + diphosphate. Functionally, promotes RNA polymerase assembly. Latches the N- and C-terminal regions of the beta' subunit thereby facilitating its interaction with the beta and alpha subunits. The chain is DNA-directed RNA polymerase subunit omega from Jannaschia sp. (strain CCS1).